A 133-amino-acid polypeptide reads, in one-letter code: Large ribosomal subunit protein bL17 (133 aa).

Belongs to the bacterial ribosomal protein bL17 family. Part of the 50S ribosomal subunit. Contacts protein L32.

In Thermodesulfovibrio yellowstonii (strain ATCC 51303 / DSM 11347 / YP87), this protein is Large ribosomal subunit protein bL17.